Here is a 378-residue protein sequence, read N- to C-terminus: Glutamate 5-kinase (378 aa).

K20 serves as a coordination point for ATP. Positions 60, 147, and 159 each coordinate substrate. Residues 179–180 and 221–227 each bind ATP; these read TD and TGGMATK. The PUA domain occupies 286–364; that stretch reads AGDIVIDAGA…QEIYKVLGYE (79 aa).

It belongs to the glutamate 5-kinase family.

It localises to the cytoplasm. The catalysed reaction is L-glutamate + ATP = L-glutamyl 5-phosphate + ADP. It participates in amino-acid biosynthesis; L-proline biosynthesis; L-glutamate 5-semialdehyde from L-glutamate: step 1/2. Its function is as follows. Catalyzes the transfer of a phosphate group to glutamate to form L-glutamate 5-phosphate. The chain is Glutamate 5-kinase from Photobacterium profundum (strain SS9).